The primary structure comprises 486 residues: Monocarboxylate transporter 12 (486 aa).

Residues 1–9 (MTKITRVGS) lie on the Cytoplasmic side of the membrane. 6 helical membrane-spanning segments follow: residues 10 to 30 (ASPP…LVTI), 58 to 78 (AWIH…GSVV), 86 to 106 (AGIM…SFAT), 115 to 135 (LGVL…AMVG), 148 to 168 (IAMS…QLLI), and 177 to 197 (LLIL…MRPI). A compositionally biased stretch (basic and acidic residues) spans 201 to 220 (EDPSGPEKSHDRDAQREDCK). The interval 201–221 (EDPSGPEKSHDRDAQREDCKQ) is disordered. 6 helical membrane passes run 253-273 (FVVL…LFVY), 289-309 (AFLM…FGWL), 320-340 (YVCY…LPML), 353-373 (FGYF…EIVG), 383-403 (VVYF…GWLV), and 410-430 (TAAF…LGFA). Topologically, residues 431 to 486 (KIAKRMKRTQVPFLVKDSDPKLHLWTNGSVAYSIAKELDQKDEESLAKARTGCNLT) are cytoplasmic.

This sequence belongs to the major facilitator superfamily. Monocarboxylate porter (TC 2.A.1.13) family. Interacts with isoform 2 of BSG; this interaction is required for its localization to the plasma membrane. As to expression, detected in kidney, choroid plexus, testis, lung, stomach, large and small intestine, spleen, fat and parotid gland. In eye, expressed in cornea, ciliary epithelium, lens epithelium and lens fiber.

The protein localises to the cell membrane. It localises to the basolateral cell membrane. It carries out the reaction creatine(in) = creatine(out). The enzyme catalyses guanidinoacetate(in) = guanidinoacetate(out). Its activity is regulated as follows. Creatine uptake is inhibited by carbonyl cyanide 3-chlorophenylhydrazone (CCCP) and by valinomycin. In terms of biological role, functions as a transporter for creatine and as well for its precursor guanidinoacetate. Transport of creatine and GAA is independent of resting membrane potential and extracellular Na(+), Cl(-), or pH. Contributes to the process of creatine biosynthesis and distribution. The protein is Monocarboxylate transporter 12 of Rattus norvegicus (Rat).